The primary structure comprises 202 residues: 3-isopropylmalate dehydratase small subunit (202 aa).

This sequence belongs to the LeuD family. LeuD type 1 subfamily. Heterodimer of LeuC and LeuD.

The enzyme catalyses (2R,3S)-3-isopropylmalate = (2S)-2-isopropylmalate. It functions in the pathway amino-acid biosynthesis; L-leucine biosynthesis; L-leucine from 3-methyl-2-oxobutanoate: step 2/4. Catalyzes the isomerization between 2-isopropylmalate and 3-isopropylmalate, via the formation of 2-isopropylmaleate. This is 3-isopropylmalate dehydratase small subunit from Rhizobium etli (strain CIAT 652).